Here is a 722-residue protein sequence, read N- to C-terminus: Glycine--tRNA ligase beta subunit (722 aa).

This sequence belongs to the class-II aminoacyl-tRNA synthetase family. As to quaternary structure, tetramer of two alpha and two beta subunits.

It localises to the cytoplasm. It carries out the reaction tRNA(Gly) + glycine + ATP = glycyl-tRNA(Gly) + AMP + diphosphate. This chain is Glycine--tRNA ligase beta subunit, found in Xylella fastidiosa (strain M12).